The following is a 138-amino-acid chain: NADH dehydrogenase [ubiquinone] iron-sulfur protein 2, mitochondrial (138 aa).

This sequence belongs to the complex I 49 kDa subunit family. As to quaternary structure, core subunit of respiratory chain NADH dehydrogenase (Complex I) which is composed of 45 different subunits. Component of the iron-sulfur (IP) fragment of the enzyme. Interacts with NDUFAF3. Interacts with NDUFAF7. Interacts with CERS2. [4Fe-4S] cluster serves as cofactor. Dimethylation at Arg-118 by NDUFAF7 takes place after NDUFS2 assembles into the complex I, leading to stabilize the early intermediate complex.

The protein localises to the mitochondrion inner membrane. It catalyses the reaction a ubiquinone + NADH + 5 H(+)(in) = a ubiquinol + NAD(+) + 4 H(+)(out). Functionally, core subunit of the mitochondrial membrane respiratory chain NADH dehydrogenase (Complex I) which catalyzes electron transfer from NADH through the respiratory chain, using ubiquinone as an electron acceptor. Essential for the catalytic activity and assembly of complex I. Redox-sensitive, critical component of the oxygen-sensing pathway in the pulmonary vasculature which plays a key role in acute pulmonary oxygen-sensing and hypoxic pulmonary vasoconstriction. Plays an important role in carotid body sensing of hypoxia. Essential for glia-like neural stem and progenitor cell proliferation, differentiation and subsequent oligodendrocyte or neuronal maturation. The polypeptide is NADH dehydrogenase [ubiquinone] iron-sulfur protein 2, mitochondrial (Mesocricetus auratus (Golden hamster)).